A 101-amino-acid polypeptide reads, in one-letter code: Large ribosomal subunit protein uL24 (101 aa).

The protein belongs to the universal ribosomal protein uL24 family. Part of the 50S ribosomal subunit.

Functionally, one of two assembly initiator proteins, it binds directly to the 5'-end of the 23S rRNA, where it nucleates assembly of the 50S subunit. In terms of biological role, one of the proteins that surrounds the polypeptide exit tunnel on the outside of the subunit. The chain is Large ribosomal subunit protein uL24 from Streptococcus mutans serotype c (strain ATCC 700610 / UA159).